Consider the following 544-residue polypeptide: Chaperonin GroEL (544 aa).

ATP contacts are provided by residues 29-32, 86-90, glycine 413, 478-480, and aspartate 494; these read TLGP, DGTTT, and NAA.

This sequence belongs to the chaperonin (HSP60) family. In terms of assembly, forms a cylinder of 14 subunits composed of two heptameric rings stacked back-to-back. Interacts with the co-chaperonin GroES.

The protein localises to the cytoplasm. The catalysed reaction is ATP + H2O + a folded polypeptide = ADP + phosphate + an unfolded polypeptide.. Functionally, together with its co-chaperonin GroES, plays an essential role in assisting protein folding. The GroEL-GroES system forms a nano-cage that allows encapsulation of the non-native substrate proteins and provides a physical environment optimized to promote and accelerate protein folding. The sequence is that of Chaperonin GroEL from Lysinibacillus sphaericus (strain C3-41).